Reading from the N-terminus, the 355-residue chain is Peptide chain release factor 1 (355 aa).

N5-methylglutamine is present on Q230.

It belongs to the prokaryotic/mitochondrial release factor family. Methylated by PrmC. Methylation increases the termination efficiency of RF1.

Its subcellular location is the cytoplasm. In terms of biological role, peptide chain release factor 1 directs the termination of translation in response to the peptide chain termination codons UAG and UAA. This chain is Peptide chain release factor 1, found in Geobacter metallireducens (strain ATCC 53774 / DSM 7210 / GS-15).